Reading from the N-terminus, the 209-residue chain is Large ribosomal subunit protein uL3 (209 aa).

The residue at position 150 (Gln-150) is an N5-methylglutamine.

Belongs to the universal ribosomal protein uL3 family. In terms of assembly, part of the 50S ribosomal subunit. Forms a cluster with proteins L14 and L19. Post-translationally, methylated by PrmB.

Functionally, one of the primary rRNA binding proteins, it binds directly near the 3'-end of the 23S rRNA, where it nucleates assembly of the 50S subunit. In Aliivibrio fischeri (strain MJ11) (Vibrio fischeri), this protein is Large ribosomal subunit protein uL3.